The following is a 1068-amino-acid chain: Carbamoyl phosphate synthase large chain (1068 aa).

A carboxyphosphate synthetic domain region spans residues methionine 1–glutamate 401. Positions 129, 169, 175, 176, 208, 210, 215, 241, 242, 243, 284, and 298 each coordinate ATP. Residues arginine 133 to leucine 327 enclose the ATP-grasp 1 domain. Mg(2+) is bound by residues glutamine 284, glutamate 298, and asparagine 300. Mn(2+) contacts are provided by glutamine 284, glutamate 298, and asparagine 300. Residues isoleucine 402 to valine 549 are oligomerization domain. The tract at residues glutamate 550 to asparagine 932 is carbamoyl phosphate synthetic domain. One can recognise an ATP-grasp 2 domain in the interval aspartate 674–leucine 864. Positions 710, 749, 751, 755, 780, 781, 782, 783, 823, and 835 each coordinate ATP. Residues glutamine 823, glutamate 835, and asparagine 837 each coordinate Mg(2+). Mn(2+) is bound by residues glutamine 823, glutamate 835, and asparagine 837. Positions methionine 933–asparagine 1068 constitute an MGS-like domain. Residues methionine 933–asparagine 1068 are allosteric domain.

It belongs to the CarB family. In terms of assembly, composed of two chains; the small (or glutamine) chain promotes the hydrolysis of glutamine to ammonia, which is used by the large (or ammonia) chain to synthesize carbamoyl phosphate. Tetramer of heterodimers (alpha,beta)4. Mg(2+) serves as cofactor. Mn(2+) is required as a cofactor.

It catalyses the reaction hydrogencarbonate + L-glutamine + 2 ATP + H2O = carbamoyl phosphate + L-glutamate + 2 ADP + phosphate + 2 H(+). The catalysed reaction is hydrogencarbonate + NH4(+) + 2 ATP = carbamoyl phosphate + 2 ADP + phosphate + 2 H(+). The protein operates within amino-acid biosynthesis; L-arginine biosynthesis; carbamoyl phosphate from bicarbonate: step 1/1. It functions in the pathway pyrimidine metabolism; UMP biosynthesis via de novo pathway; (S)-dihydroorotate from bicarbonate: step 1/3. In terms of biological role, large subunit of the glutamine-dependent carbamoyl phosphate synthetase (CPSase). CPSase catalyzes the formation of carbamoyl phosphate from the ammonia moiety of glutamine, carbonate, and phosphate donated by ATP, constituting the first step of 2 biosynthetic pathways, one leading to arginine and/or urea and the other to pyrimidine nucleotides. The large subunit (synthetase) binds the substrates ammonia (free or transferred from glutamine from the small subunit), hydrogencarbonate and ATP and carries out an ATP-coupled ligase reaction, activating hydrogencarbonate by forming carboxy phosphate which reacts with ammonia to form carbamoyl phosphate. The sequence is that of Carbamoyl phosphate synthase large chain from Clostridium botulinum (strain Kyoto / Type A2).